Here is an 84-residue protein sequence, read N- to C-terminus: Exodeoxyribonuclease 7 small subunit (84 aa).

The protein belongs to the XseB family. In terms of assembly, heterooligomer composed of large and small subunits.

It is found in the cytoplasm. It carries out the reaction Exonucleolytic cleavage in either 5'- to 3'- or 3'- to 5'-direction to yield nucleoside 5'-phosphates.. In terms of biological role, bidirectionally degrades single-stranded DNA into large acid-insoluble oligonucleotides, which are then degraded further into small acid-soluble oligonucleotides. This Yersinia pseudotuberculosis serotype O:1b (strain IP 31758) protein is Exodeoxyribonuclease 7 small subunit.